Here is a 29-residue protein sequence, read N- to C-terminus: Cyclotide mden-A (29 aa).

Positions 1–29 (GIPTCGETCTLGTCNTPGCTCSWPICTKN) form a cross-link, cyclopeptide (Gly-Asn). Disulfide bonds link Cys5–Cys19, Cys9–Cys21, and Cys14–Cys26.

This sequence belongs to the cyclotide family. Moebius subfamily. In terms of processing, this is a cyclic peptide.

Functionally, probably participates in a plant defense mechanism. The polypeptide is Cyclotide mden-A (Melicytus dentatus (Tree violet)).